A 250-amino-acid polypeptide reads, in one-letter code: 3-deoxy-manno-octulosonate cytidylyltransferase (250 aa).

The protein belongs to the KdsB family.

It localises to the cytoplasm. The catalysed reaction is 3-deoxy-alpha-D-manno-oct-2-ulosonate + CTP = CMP-3-deoxy-beta-D-manno-octulosonate + diphosphate. The protein operates within nucleotide-sugar biosynthesis; CMP-3-deoxy-D-manno-octulosonate biosynthesis; CMP-3-deoxy-D-manno-octulosonate from 3-deoxy-D-manno-octulosonate and CTP: step 1/1. Its pathway is bacterial outer membrane biogenesis; lipopolysaccharide biosynthesis. Activates KDO (a required 8-carbon sugar) for incorporation into bacterial lipopolysaccharide in Gram-negative bacteria. In Syntrophotalea carbinolica (strain DSM 2380 / NBRC 103641 / GraBd1) (Pelobacter carbinolicus), this protein is 3-deoxy-manno-octulosonate cytidylyltransferase.